Consider the following 109-residue polypeptide: Cell division protein ZapA (109 aa).

Residues 21–99 (PEQRDALNQA…IEQALLEQGR (79 aa)) adopt a coiled-coil conformation.

This sequence belongs to the ZapA family. Type 1 subfamily. As to quaternary structure, homodimer. Interacts with FtsZ.

Its subcellular location is the cytoplasm. Functionally, activator of cell division through the inhibition of FtsZ GTPase activity, therefore promoting FtsZ assembly into bundles of protofilaments necessary for the formation of the division Z ring. It is recruited early at mid-cell but it is not essential for cell division. This is Cell division protein ZapA from Klebsiella pneumoniae subsp. pneumoniae (strain ATCC 700721 / MGH 78578).